The following is a 382-amino-acid chain: E3 ubiquitin-protein ligase RNF133 (382 aa).

In terms of domain architecture, PA spans 65–167; the sequence is SSILKRVAGV…IKGMEILHLI (103 aa). Residues 190-210 traverse the membrane as a helical segment; that stretch reads YFVSFMIVTTATLAYFTFYHI. The RING-type; atypical zinc-finger motif lies at 256–297; that stretch reads CVICFEAYKPNEIVRILTCKHFFHKNCIDPWILAHGTCPMCK. A disordered region spans residues 328–382; that stretch reads TLSPVEEETNYELPPARTSSKVTHVQEHPTSSANAGSQPPEAEETSHPSHGQQVL. Positions 344 to 364 are enriched in polar residues; the sequence is RTSSKVTHVQEHPTSSANAGS.

As to quaternary structure, interacts with E3 ligase UBE2J1. In terms of processing, auto-ubiquitinated. Expression is testis-specific.

It localises to the endoplasmic reticulum membrane. The catalysed reaction is S-ubiquitinyl-[E2 ubiquitin-conjugating enzyme]-L-cysteine + [acceptor protein]-L-lysine = [E2 ubiquitin-conjugating enzyme]-L-cysteine + N(6)-ubiquitinyl-[acceptor protein]-L-lysine.. It participates in protein modification; protein ubiquitination. Has E3 ubiquitin-protein ligase activity. Plays a role in male fecundity through the interaction with the E2 ubituitin-protein ligase UBE2J1. The chain is E3 ubiquitin-protein ligase RNF133 (Rnf133) from Mus musculus (Mouse).